Consider the following 639-residue polypeptide: 3D-(3,5/4)-trihydroxycyclohexane-1,2-dione hydrolase (639 aa).

E62 contacts thiamine diphosphate. Residues 438–518 are thiamine pyrophosphate binding; that stretch reads SLPGDLQRMW…INILLFDNCG (81 aa). Residues D489 and N516 each contribute to the Mg(2+) site.

This sequence belongs to the TPP enzyme family. The cofactor is Mg(2+). Thiamine diphosphate is required as a cofactor.

It carries out the reaction 3D-3,5/4-trihydroxycyclohexane-1,2-dione + H2O = 5-deoxy-D-glucuronate + H(+). The protein operates within polyol metabolism; myo-inositol degradation into acetyl-CoA; acetyl-CoA from myo-inositol: step 3/7. Its function is as follows. Involved in the cleavage of the C1-C2 bond of 3D-(3,5/4)-trihydroxycyclohexane-1,2-dione (THcHDO) to yield 5-deoxy-glucuronate (5DG). The chain is 3D-(3,5/4)-trihydroxycyclohexane-1,2-dione hydrolase from Clostridium perfringens (strain ATCC 13124 / DSM 756 / JCM 1290 / NCIMB 6125 / NCTC 8237 / Type A).